The chain runs to 332 residues: MSLKEKLIEKVHTEEHPHAHNKITVVGVGAVGMACAISILMKDLADELALVDVMEDKLKGEMLDLQHGSLFLKTPKIVSGKDYAVTAHSKLVIITAGARQQEGESRLNLVQRNVNIFKFIIPNVVKYSPDCKLLVVSNPVDILTYVAWKISGFPKHRVIGSGCNLDSARFRHLMGERLHINPLSCHGWIVGEHGDSSVPVWSGVNVAGVSLKSLHPEMGADGDKENWKDVHKQVVESAYEVIKLKGYTSWAIGLSVADLAETVMKNLRRVHPVSTMVKGMHGIKDDVFLSVPCVLGYSGITDVVKMTLKPEEEDKLKKSADTLWGIEKELQF.

Residues 29–57 (GAVGMACAISILMKDLADELALVDVMEDK) and Arg-99 contribute to the NAD(+) site. Substrate is bound by residues Arg-106, Asn-138, and Arg-169. NAD(+) is bound at residue Asn-138. His-193 (proton acceptor) is an active-site residue. Thr-248 lines the substrate pocket.

This sequence belongs to the LDH/MDH superfamily. LDH family. In terms of assembly, homotetramer.

It localises to the cytoplasm. It catalyses the reaction (S)-lactate + NAD(+) = pyruvate + NADH + H(+). The protein operates within fermentation; pyruvate fermentation to lactate; (S)-lactate from pyruvate: step 1/1. Functionally, interconverts simultaneously and stereospecifically pyruvate and lactate with concomitant interconversion of NADH and NAD(+). The sequence is that of L-lactate dehydrogenase A chain (LDHA) from Sceloporus undulatus (Eastern fence lizard).